Here is a 189-residue protein sequence, read N- to C-terminus: Glycerol-3-phosphate acyltransferase (189 aa).

The next 5 membrane-spanning stretches (helical) occupy residues 1–21 (MFWL…AIVL), 50–70 (KLAI…VLLA), 77–97 (LHAQ…PLYF), 111–131 (MLMG…LLTF), and 151–171 (LLAW…AMIV).

It belongs to the PlsY family. In terms of assembly, probably interacts with PlsX.

Its subcellular location is the cell inner membrane. The catalysed reaction is an acyl phosphate + sn-glycerol 3-phosphate = a 1-acyl-sn-glycero-3-phosphate + phosphate. It functions in the pathway lipid metabolism; phospholipid metabolism. In terms of biological role, catalyzes the transfer of an acyl group from acyl-phosphate (acyl-PO(4)) to glycerol-3-phosphate (G3P) to form lysophosphatidic acid (LPA). This enzyme utilizes acyl-phosphate as fatty acyl donor, but not acyl-CoA or acyl-ACP. In Pseudomonas putida (strain GB-1), this protein is Glycerol-3-phosphate acyltransferase.